We begin with the raw amino-acid sequence, 592 residues long: K(+) efflux antiporter 4 (592 aa).

The first 35 residues, 1–35 (MRRCKNNTDKFSVITMRLLTLLLICTFFFFFSFAY), serve as a signal peptide directing secretion. 12 helical membrane passes run 169 to 189 (LISD…AFAC), 193 to 213 (PVIT…LSFV), 221 to 241 (TVAQ…FSAA), 248 to 268 (AVAI…SGIT), 279 to 299 (GIFV…KFLM), 313 to 333 (VGTL…LPVL), 343 to 363 (VLSM…LFVL), 388 to 408 (LAAV…GLSL), 437 to 457 (NFFA…HFLW), 462 to 482 (ILLA…AIVV), 491 to 511 (TAVL…VLLS), and 535 to 555 (LVTT…GVLL).

Belongs to the monovalent cation:proton antiporter 2 (CPA2) transporter (TC 2.A.37) family. KEA (TC 2.A.37.1) subfamily. In terms of tissue distribution, expressed in roots, stems, leaves, flowers and silique.

It localises to the golgi apparatus membrane. The protein resides in the golgi apparatus. Its subcellular location is the trans-Golgi network membrane. It is found in the prevacuolar compartment membrane. The protein localises to the endomembrane system. It carries out the reaction K(+)(in) + H(+)(out) = K(+)(out) + H(+)(in). Functionally, electroneutral K(+)/H(+) efflux antiporter involved in K(+) homeostasis and osmotic adjustment. Together with KEA5 and KEA6, promotes growth and development, and facilitates endosomal pH and ions homeostasis, as well as salt tolerance (e.g. K(+), NaCl and LiCl), probably by supporting cell wall biosynthesis during rapid etiolated seedling growth. The sequence is that of K(+) efflux antiporter 4 from Arabidopsis thaliana (Mouse-ear cress).